Consider the following 316-residue polypeptide: Ribosomal RNA small subunit methyltransferase A (316 aa).

Positions 33, 35, 60, 81, 110, and 133 each coordinate S-adenosyl-L-methionine.

Belongs to the class I-like SAM-binding methyltransferase superfamily. rRNA adenine N(6)-methyltransferase family. RsmA subfamily.

The protein resides in the cytoplasm. The enzyme catalyses adenosine(1518)/adenosine(1519) in 16S rRNA + 4 S-adenosyl-L-methionine = N(6)-dimethyladenosine(1518)/N(6)-dimethyladenosine(1519) in 16S rRNA + 4 S-adenosyl-L-homocysteine + 4 H(+). Functionally, specifically dimethylates two adjacent adenosines (A1518 and A1519) in the loop of a conserved hairpin near the 3'-end of 16S rRNA in the 30S particle. May play a critical role in biogenesis of 30S subunits. This chain is Ribosomal RNA small subunit methyltransferase A, found in Corynebacterium jeikeium (strain K411).